The chain runs to 194 residues: BCL2/adenovirus E1B 19 kDa protein-interacting protein 3 (194 aa).

The disordered stretch occupies residues 1-102; the sequence is MSQNGAPGMQ…SQSEEDDIER (102 aa). Over residues 42 to 55 the composition is skewed to basic and acidic residues; the sequence is DMEKILLDAQHESG. Phosphoserine occurs at positions 54, 66, 86, 92, and 95. Over residues 56–69 the composition is skewed to low complexity; sequence RSSSKSSHCDSPPR. Positions 78-88 are enriched in basic and acidic residues; the sequence is RASETDTHSIG. The BH3 signature appears at 100-125; it reads IERRKEVESILKKNSDWIWDWSSRPE. A helical membrane pass occupies residues 164–184; it reads VFLPSLLLSHLLAIGLGIYIG.

The protein belongs to the NIP3 family. Homodimer. Binds to BCL2. Interacts with BNIP3L and ACAA2. Interacts (via BH3 domain) with SPATA18 (via coiled-coil domains). Interacts with BOK; promotes BOK oligomerization. Interacts with PPTC7; this interaction promotes BNIP3 degradation. As to quaternary structure, (Microbial infection) Interacts with adenovirus E1B 19 kDa protein. In terms of assembly, (Microbial infection) Interacts with Epstein-Barr virus BHRF1.

It is found in the mitochondrion. The protein resides in the mitochondrion outer membrane. Its function is as follows. Apoptosis-inducing protein that can overcome BCL2 suppression. May play a role in repartitioning calcium between the two major intracellular calcium stores in association with BCL2. Involved in mitochondrial quality control via its interaction with SPATA18/MIEAP: in response to mitochondrial damage, participates in mitochondrial protein catabolic process (also named MALM) leading to the degradation of damaged proteins inside mitochondria. The physical interaction of SPATA18/MIEAP, BNIP3 and BNIP3L/NIX at the mitochondrial outer membrane regulates the opening of a pore in the mitochondrial double membrane in order to mediate the translocation of lysosomal proteins from the cytoplasm to the mitochondrial matrix. Plays an important role in the calprotectin (S100A8/A9)-induced cell death pathway. The polypeptide is BCL2/adenovirus E1B 19 kDa protein-interacting protein 3 (Homo sapiens (Human)).